The chain runs to 443 residues: MLKNSHVCIIIWLFGFISGFNIMITGNTLNYWFAKKDIALQTIGILSFITLPYSINFLLAPVFDTVQIKCLNKILGHRLSWICLTSTTLISLTSILSFLDPGTDLVLLSFIAFIISFFSATQDTILSALRTEIVPKELLGFTSGIYIFGYRVGMLLASSGAIYLSIYLTFNKIYQIFACVIFVYLILLILVSRYTNSVDVIEENTSYFYVARCYTMEEMHLKNEFFIKHYFNFFKNCISAYLLKIFSGSHVYRNDISLAYFIVLILIFLVLYRLPDNLINVMINPFLLHLGYNAFEIASVCKFCGVIGAIIGGLIGGIIMKYKNMLYSILLFGIIHALSHILFILLEVNGKNSLILFITIGIESITGGMTMTAYIAFISSLCQGKFRATQYSLLSSMMGISRSIFPIISGYMVVNFGWQNFFLFTTIITIPSLLILLKIQTKL.

The next 12 helical transmembrane spans lie at 6–26 (HVCI…MITG), 43–63 (IGIL…APVF), 74–96 (ILGH…TSIL), 106–128 (VLLS…ILSA), 144–164 (GIYI…AIYL), 172–192 (KIYQ…ILVS), 255–275 (DISL…YRLP), 300–320 (VCKF…GIIM), 326–346 (LYSI…FILL), 355–375 (ILFI…TAYI), 394–414 (LSSM…YMVV), and 416–436 (FGWQ…LLIL).

The protein belongs to the major facilitator superfamily.

Its subcellular location is the cell inner membrane. The sequence is that of Putative transporter AmpG 1 (ampG1) from Rickettsia typhi (strain ATCC VR-144 / Wilmington).